The primary structure comprises 578 residues: Probable nucleoredoxin 1 (578 aa).

Thioredoxin domains follow at residues 18–172 (SLLS…RARR), 178–321 (SVLV…EKFQ), and 325–485 (ELEK…EIEA).

The protein belongs to the nucleoredoxin family.

The catalysed reaction is [protein]-dithiol + NAD(+) = [protein]-disulfide + NADH + H(+). It carries out the reaction [protein]-dithiol + NADP(+) = [protein]-disulfide + NADPH + H(+). Its function is as follows. Probable thiol-disulfide oxidoreductase required for pollen tube growth and pollen function in the pistil. Seems not to be required for in vitro pollen tube growth. May be involved in the generation of lipid signaling molecules in pistil. The protein is Probable nucleoredoxin 1 of Arabidopsis thaliana (Mouse-ear cress).